Reading from the N-terminus, the 609-residue chain is COP9 signalosome complex subunit 5 (609 aa).

An MPN domain is found at 75–215 (CYISSLALMK…IGAFRTYPEG (141 aa)). 3 residues coordinate Zn(2+): histidine 161, histidine 163, and aspartate 174. Positions 161-174 (HSHPGYGCWLSGID) match the JAMM motif motif. 2 disordered regions span residues 210–248 (RTYPEGSQQQPSMTNKTRKDQNKPHNSGANANRKILPKS) and 381–456 (TTTK…EVDS). Positions 214–224 (EGSQQQPSMTN) are enriched in polar residues. 3 stretches are compositionally biased toward acidic residues: residues 392 to 404 (TDIDDETMLDESD), 420 to 431 (SDDDDEEEEGEG), and 445 to 456 (EVEEGPTDEVDS).

This sequence belongs to the peptidase M67A family. CSN5 subfamily. Component of the COP9 signalosome (CSN) complex.

Its subcellular location is the cytoplasm. It localises to the nucleus. In terms of biological role, catalytic Component of the COP9 signalosome (CSN) complex that acts as an regulator of the ubiquitin (Ubl) conjugation pathway by mediating the deneddylation of the cullin subunit of SCF-type E3 ubiquitin-protein ligase complexes. The protein is COP9 signalosome complex subunit 5 (JAB1) of Candida albicans (strain SC5314 / ATCC MYA-2876) (Yeast).